The primary structure comprises 362 residues: Protein ABHD12B (362 aa).

It belongs to the serine esterase family.

This Homo sapiens (Human) protein is Protein ABHD12B.